We begin with the raw amino-acid sequence, 530 residues long: Autoinducer-2 kinase (530 aa).

The protein belongs to the FGGY kinase family.

The protein localises to the cytoplasm. The enzyme catalyses (S)-4,5-dihydroxypentane-2,3-dione + ATP = (2S)-2-hydroxy-3,4-dioxopentyl phosphate + ADP + H(+). Catalyzes the phosphorylation of autoinducer-2 (AI-2) to phospho-AI-2, which subsequently inactivates the transcriptional regulator LsrR and leads to the transcription of the lsr operon. Phosphorylates the ring-open form of (S)-4,5-dihydroxypentane-2,3-dione (DPD), which is the precursor to all AI-2 signaling molecules, at the C5 position. This chain is Autoinducer-2 kinase, found in Salmonella choleraesuis (strain SC-B67).